Consider the following 750-residue polypeptide: ABC transporter D family member 3 (750 aa).

Residues 1–14 (MKKNNVNNITETLN) are compositionally biased toward polar residues. Residues 1-32 (MKKNNVNNITETLNSSSSSSSSSGSSSDEEVK) are disordered. Residues 15 to 26 (SSSSSSSSSGSS) are compositionally biased toward low complexity. The next 4 membrane-spanning stretches (helical) occupy residues 63-83 (IVII…LLFG), 123-143 (FAIG…SIMA), 188-208 (FTTL…VVVY), and 215-235 (TTID…GYFI). An ABC transmembrane type-1 domain is found at 74–362 (PLLLFLLLFG…EQAKQQFEAL (289 aa)). Positions 334–370 (ALLKRSNKNIKNEELLVEEEQAKQQFEALLKNKKRVI) form a coiled coil. The chain crosses the membrane as a helical span at residues 382-402 (MFTFFSPLINYFIISIPVFFL). Residues 507–737 (ITLDDVTYFT…SNNINTINID (231 aa)) enclose the ABC transporter domain. Position 540 to 547 (540 to 547 (GPSGSGKS)) interacts with ATP.

This sequence belongs to the ABC transporter superfamily. ABCD family. Peroxisomal fatty acyl CoA transporter (TC 3.A.1.203) subfamily.

Its subcellular location is the membrane. The chain is ABC transporter D family member 3 (abcD3) from Dictyostelium discoideum (Social amoeba).